We begin with the raw amino-acid sequence, 86 residues long: Cell division topological specificity factor (86 aa).

Belongs to the MinE family.

Its function is as follows. Prevents the cell division inhibition by proteins MinC and MinD at internal division sites while permitting inhibition at polar sites. This ensures cell division at the proper site by restricting the formation of a division septum at the midpoint of the long axis of the cell. In Bordetella petrii (strain ATCC BAA-461 / DSM 12804 / CCUG 43448), this protein is Cell division topological specificity factor.